The chain runs to 319 residues: Thioredoxin reductase 1 (319 aa).

FAD is bound by residues 11 to 14 (SGPA), 40 to 41 (IA), Gln45, Asn54, Val87, Cys145, Asp288, and 295 to 297 (RQA). Residues Cys142 and Cys145 are joined by a disulfide bond. Ser303 is modified (phosphoserine).

This sequence belongs to the class-II pyridine nucleotide-disulfide oxidoreductase family. As to quaternary structure, homodimer. Requires FAD as cofactor.

The protein localises to the cytoplasm. The protein resides in the mitochondrion intermembrane space. The enzyme catalyses [thioredoxin]-dithiol + NADP(+) = [thioredoxin]-disulfide + NADPH + H(+). Its function is as follows. Central component in the thioredoxin system. Reduces thioredoxins 1 and 2. The sequence is that of Thioredoxin reductase 1 (TRR1) from Saccharomyces cerevisiae (strain ATCC 204508 / S288c) (Baker's yeast).